Here is a 377-residue protein sequence, read N- to C-terminus: Tubulin--tyrosine ligase (377 aa).

A TTL domain is found at Thr-3–Gln-370.

Belongs to the tubulin--tyrosine ligase family. Monomer. Mg(2+) is required as a cofactor. The cofactor is K(+).

The catalysed reaction is C-terminal L-alpha-aminoacyl-L-glutamyl-L-glutamyl-[tubulin] + L-tyrosine + ATP = C-terminal L-alpha-aminoacyl-L-glutamyl-L-glutamyl-L-tyrosyl-[tubulin] + ADP + phosphate + H(+). Catalyzes the post-translational addition of a tyrosine to the C-terminal end of detyrosinated alpha-tubulin. This is Tubulin--tyrosine ligase (Ttl) from Mus musculus (Mouse).